The sequence spans 305 residues: tRNA dimethylallyltransferase (305 aa).

9–16 (GPTGAGKT) provides a ligand contact to ATP. 11–16 (TGAGKT) provides a ligand contact to substrate. Interaction with substrate tRNA regions lie at residues 34-37 (DSRQ) and 158-162 (QRIVR).

The protein belongs to the IPP transferase family. As to quaternary structure, monomer. Mg(2+) is required as a cofactor.

The enzyme catalyses adenosine(37) in tRNA + dimethylallyl diphosphate = N(6)-dimethylallyladenosine(37) in tRNA + diphosphate. In terms of biological role, catalyzes the transfer of a dimethylallyl group onto the adenine at position 37 in tRNAs that read codons beginning with uridine, leading to the formation of N6-(dimethylallyl)adenosine (i(6)A). The chain is tRNA dimethylallyltransferase from Oleidesulfovibrio alaskensis (strain ATCC BAA-1058 / DSM 17464 / G20) (Desulfovibrio alaskensis).